We begin with the raw amino-acid sequence, 841 residues long: uncharacterized protein (841 aa).

The first 31 residues, 1 to 31, serve as a signal peptide directing secretion; that stretch reads MKIERYFKAIARAFIITFLFSLILQDNGVLA.

It is found in the secreted. This is an uncharacterized protein from Schizosaccharomyces pombe (strain 972 / ATCC 24843) (Fission yeast).